We begin with the raw amino-acid sequence, 373 residues long: Chorismate synthase (373 aa).

R46 contacts NADP(+). FMN contacts are provided by residues 123–125, 251–252, G295, 310–314, and R337; these read RSS, NA, and KPTPS.

This sequence belongs to the chorismate synthase family. FMNH2 is required as a cofactor.

The enzyme catalyses 5-O-(1-carboxyvinyl)-3-phosphoshikimate = chorismate + phosphate. It functions in the pathway metabolic intermediate biosynthesis; chorismate biosynthesis; chorismate from D-erythrose 4-phosphate and phosphoenolpyruvate: step 7/7. Functionally, catalyzes the anti-1,4-elimination of the C-3 phosphate and the C-6 proR hydrogen from 5-enolpyruvylshikimate-3-phosphate (EPSP) to yield chorismate, which is the branch point compound that serves as the starting substrate for the three terminal pathways of aromatic amino acid biosynthesis. This reaction introduces a second double bond into the aromatic ring system. The protein is Chorismate synthase of Methanococcus maripaludis (strain C7 / ATCC BAA-1331).